The primary structure comprises 394 residues: Obg-like ATPase 1 (394 aa).

Positions 25–282 (LKIGIVGLPN…MAPDEAAKYC (258 aa)) constitute an OBG-type G domain. ATP-binding positions include 34-39 (NVGKST), 56-60 (FCTIE), and 94-97 (DIAG). 2 residues coordinate Mg(2+): Ser38 and Thr58. Phe129 contributes to the GTP binding site. Residues 230 to 231 (NL), Leu231, and 263 to 265 (SGV) each bind ATP. 263 to 265 (SGV) contributes to the GTP binding site. The 84-residue stretch at 303 to 386 (NLIYFFTAGP…QDGDIIFFKF (84 aa)) folds into the TGS domain.

The protein belongs to the TRAFAC class OBG-HflX-like GTPase superfamily. OBG GTPase family. YchF/OLA1 subfamily. As to quaternary structure, monomer (Potential). Interacts with CAR4/GAP1. Requires Mg(2+) as cofactor.

It localises to the cytoplasm. The protein resides in the cytosol. With respect to regulation, activated by GAP1. In terms of biological role, hydrolyzes ATP, and can also hydrolyze GTP with lower efficiency. Has lower affinity for GTP (Potential). Exhibits GTPase activity. Confers sensitivity to salinity stress by suppressing the anti-oxidation enzymatic activities and increasing lipid peroxidation thus leading to the accumulation of reactive oxygen species (ROS). Acts as a negative regulator of disease resistance against bacterial pathogen. The chain is Obg-like ATPase 1 from Arabidopsis thaliana (Mouse-ear cress).